Reading from the N-terminus, the 300-residue chain is Meiosis-specific cyclin crs1 (300 aa).

The Cyclin N-terminal domain occupies 61–183; it reads IIEQEKKGLT…VLALLNFDIY (123 aa).

This sequence belongs to the cyclin family. Cyclin AB subfamily.

The protein localises to the cytoplasm. The protein resides in the nucleus. Has a role in meiotic chromosome segregation. This chain is Meiosis-specific cyclin crs1 (crs1), found in Schizosaccharomyces pombe (strain 972 / ATCC 24843) (Fission yeast).